Here is a 228-residue protein sequence, read N- to C-terminus: Uracil-DNA glycosylase (228 aa).

Residue Asp64 is the Proton acceptor of the active site.

The protein belongs to the uracil-DNA glycosylase (UDG) superfamily. UNG family.

It is found in the cytoplasm. The enzyme catalyses Hydrolyzes single-stranded DNA or mismatched double-stranded DNA and polynucleotides, releasing free uracil.. Excises uracil residues from the DNA which can arise as a result of misincorporation of dUMP residues by DNA polymerase or due to deamination of cytosine. In Yersinia pseudotuberculosis serotype IB (strain PB1/+), this protein is Uracil-DNA glycosylase.